A 209-amino-acid polypeptide reads, in one-letter code: MLVLIKHPLIEIKLTEMRAAETSHKVFRSNLDEIASLMVYEVMRNYQTKPKKVITPIGVETIGKSFDREVVIIPILRAGLGMMQGILAMVPEARVGHIGIYRDEKTFQPIDYFFKIPDVPKDSYIMVVDPMLATGVSANDAINKLVNLGFSNIKLICLVGVQKGIDLIQKNHPNVDIYLASQDEKLNENNYIIPGLGDAGDRIFGTKAK.

5-phospho-alpha-D-ribose 1-diphosphate-binding positions include Arg77, Arg102, and 129–137 (DPMLATGVS). Uracil is bound by residues Ile192 and 197 to 199 (GDA). Position 198 (Asp198) interacts with 5-phospho-alpha-D-ribose 1-diphosphate.

The protein belongs to the UPRTase family. Mg(2+) serves as cofactor.

It carries out the reaction UMP + diphosphate = 5-phospho-alpha-D-ribose 1-diphosphate + uracil. It participates in pyrimidine metabolism; UMP biosynthesis via salvage pathway; UMP from uracil: step 1/1. Allosterically activated by GTP. Functionally, catalyzes the conversion of uracil and 5-phospho-alpha-D-ribose 1-diphosphate (PRPP) to UMP and diphosphate. This is Uracil phosphoribosyltransferase from Metamycoplasma arthritidis (strain 158L3-1) (Mycoplasma arthritidis).